The primary structure comprises 648 residues: Biosynthetic arginine decarboxylase (648 aa).

N6-(pyridoxal phosphate)lysine is present on Lys-109. 291-301 is a binding site for substrate; the sequence is IDVGGGLGIDF.

The protein belongs to the Orn/Lys/Arg decarboxylase class-II family. SpeA subfamily. Requires Mg(2+) as cofactor. It depends on pyridoxal 5'-phosphate as a cofactor.

It carries out the reaction L-arginine + H(+) = agmatine + CO2. In terms of biological role, catalyzes the biosynthesis of agmatine from arginine. This is Biosynthetic arginine decarboxylase from Prochlorococcus marinus subsp. pastoris (strain CCMP1986 / NIES-2087 / MED4).